A 318-amino-acid chain; its full sequence is Olfactory receptor 2A2 (318 aa).

Topologically, residues 1–24 (MEGNQTWITDITLLGFQVGPALAI) are extracellular. A glycan (N-linked (GlcNAc...) asparagine) is linked at N4. The helical transmembrane segment at 25-48 (LLCGLFSVFYTLTLLGNGVIFGII) threads the bilayer. Residues 49 to 56 (CLDSKLHT) lie on the Cytoplasmic side of the membrane. A helical membrane pass occupies residues 57-78 (PMYFFLSHLAIIDMSYASNNVP). The Extracellular segment spans residues 79 to 99 (KMLANLMNQKRTISFVPCIMQ). The chain crosses the membrane as a helical span at residues 100 to 119 (TFLYLAFAVTECLILVVMSY). Topologically, residues 120–138 (DRYVAICHPFQYTVIMSWR) are cytoplasmic. Residues 139 to 157 (VCTILVLTSWSCGFALSLV) form a helical membrane-spanning segment. Topologically, residues 158–194 (HEILLLRLPFCGPRDVNHLFCEILSVLKLACADTWVN) are extracellular. The chain crosses the membrane as a helical span at residues 195-218 (QVVIFATCVFVLVGPLSLILVSYM). The Cytoplasmic segment spans residues 219-235 (HILGAILKIQTKEGRIK). Residues 236 to 258 (AFSTCSSHLCVVGLFFGIAMVVY) form a helical membrane-spanning segment. At 259–271 (MVPDSNQREEQEK) the chain is on the extracellular side. A helical membrane pass occupies residues 272–291 (MLSLFHSVFNPMLNPLIYSL). The Cytoplasmic portion of the chain corresponds to 292–310 (RNAQLKGALHRALQRKRSM).

Belongs to the G-protein coupled receptor 1 family.

Its subcellular location is the cell membrane. Odorant receptor. This is Olfactory receptor 2A2 (OR2A2) from Homo sapiens (Human).